Here is a 413-residue protein sequence, read N- to C-terminus: MSIKINNVKGTRDLFGEQLEKMRLIEQVAKNLSIRYLFTELETPIIEHTELFIRNLGETSDVVNKEIYSFQDKSGHNICLRPEFTAAVTRAFVENFQHIQSPVRLFSFGPLFRYERPQKGRYRQFHQVNFEWIGAKHYLWAVEAIVLAKSFLKEIGIRCEIRVNSLGCSRTREEYKLALINYFQQYKEHLSADSLLRLKKNPLRILDSKDPSEKEIVVGAPRILDYHTDDALKEFESICDILKLLDIEFSVDHRLVRGLDYYSGLIFEFTSPDLGAQDALLGGGAYEQLSENLGGKKVQSIGFAAGIERLIDIMPVLAPTSDKIVSIVPIGEIAEREALKLLFYLRSEGLCADMCYGLSVKSRMKRAERSTVTVILGEEEFSRGESTVRIMETGQQMTVAHEKLLSTLRELLC.

This sequence belongs to the class-II aminoacyl-tRNA synthetase family. Homodimer.

The protein localises to the cytoplasm. It carries out the reaction tRNA(His) + L-histidine + ATP = L-histidyl-tRNA(His) + AMP + diphosphate + H(+). This chain is Histidine--tRNA ligase, found in Neorickettsia sennetsu (strain ATCC VR-367 / Miyayama) (Ehrlichia sennetsu).